The sequence spans 67 residues: Large ribosomal subunit protein bL35 (67 aa).

Belongs to the bacterial ribosomal protein bL35 family.

In Allorhizobium ampelinum (strain ATCC BAA-846 / DSM 112012 / S4) (Agrobacterium vitis (strain S4)), this protein is Large ribosomal subunit protein bL35.